The sequence spans 38 residues: Large ribosomal subunit protein bL36 (38 aa).

It belongs to the bacterial ribosomal protein bL36 family.

The polypeptide is Large ribosomal subunit protein bL36 (Acholeplasma laidlawii (strain PG-8A)).